A 79-amino-acid chain; its full sequence is D-alanyl carrier protein (79 aa).

The region spanning methionine 1 to cysteine 77 is the Carrier domain. An O-(pantetheine 4'-phosphoryl)serine modification is found at serine 35.

It belongs to the DltC family. Post-translationally, 4'-phosphopantetheine is transferred from CoA to a specific serine of apo-DCP.

The protein resides in the cytoplasm. The protein operates within cell wall biogenesis; lipoteichoic acid biosynthesis. Its function is as follows. Carrier protein involved in the D-alanylation of lipoteichoic acid (LTA). The loading of thioester-linked D-alanine onto DltC is catalyzed by D-alanine--D-alanyl carrier protein ligase DltA. The DltC-carried D-alanyl group is further transferred to cell membrane phosphatidylglycerol (PG) by forming an ester bond, probably catalyzed by DltD. D-alanylation of LTA plays an important role in modulating the properties of the cell wall in Gram-positive bacteria, influencing the net charge of the cell wall. This is D-alanyl carrier protein from Streptococcus agalactiae serotype Ia (strain ATCC 27591 / A909 / CDC SS700).